A 771-amino-acid chain; its full sequence is Ribonucleoside-diphosphate reductase large subunit (771 aa).

Positions 1–92 constitute an ATP-cone domain; that stretch reads MFVIKRNGYK…ISNLHKETKK (92 aa). ATP-binding positions include 5 to 6, 11 to 17, threonine 53, aspartate 57, and lysine 88; these read KR and ENVMFDK. The GDP site is built by serine 202 and serine 217. DTTP contacts are provided by residues 226-228, lysine 243, and arginine 256; that span reads DSI. Asparagine 427 contributes to the GDP binding site. Asparagine 427 (proton acceptor) is an active-site residue. The active-site Cysteine radical intermediate is cysteine 429. GDP is bound by residues glutamate 431 and 603 to 606; that span reads TAST. Residue glutamate 431 is the Proton acceptor of the active site.

Belongs to the ribonucleoside diphosphate reductase large chain family. As to quaternary structure, interacts with RNR2/OPG047 subunit. Mg(2+) serves as cofactor.

The catalysed reaction is a 2'-deoxyribonucleoside 5'-diphosphate + [thioredoxin]-disulfide + H2O = a ribonucleoside 5'-diphosphate + [thioredoxin]-dithiol. Functionally, ribonucleoside-diphosphate reductase holoenzyme provides the precursors necessary for viral DNA synthesis. Allows virus growth in non-dividing cells. Catalyzes the biosynthesis of deoxyribonucleotides from the corresponding ribonucleotides. This Monkeypox virus protein is Ribonucleoside-diphosphate reductase large subunit (OPG080).